The sequence spans 118 residues: Inner membrane protein YhaI (118 aa).

At 1–25 (MQWYLSVLKNYVGFSGRARRKEYWM) the chain is on the periplasmic side. The helical transmembrane segment at 26 to 46 (FTLINAIVGAIINVIQLILGL) threads the bilayer. Position 47 (Glu-47) is a topological domain, cytoplasmic. Residues 48–68 (LPYLSMLYLLATFLPVLALAI) form a helical membrane-spanning segment. The Periplasmic portion of the chain corresponds to 69 to 77 (RRLHDTDRS). Residues 78–98 (GAWALLFFVPFIGWLVLLVFF) traverse the membrane as a helical segment. Over 99–118 (CTEGTSGSNRYGNDPKFGSN) the chain is Cytoplasmic.

To E.coli YhaH.

Its subcellular location is the cell inner membrane. In Escherichia coli O157:H7, this protein is Inner membrane protein YhaI (yhaI).